The chain runs to 463 residues: Glycine--tRNA ligase (463 aa).

Substrate-binding residues include arginine 98 and glutamate 174. Residues 206-208 (RNE), 216-221 (FRTREF), 290-291 (EL), and 334-337 (GADR) each bind ATP. Position 221–225 (221–225 (FEQME)) interacts with substrate. 330 to 334 (EPSLG) lines the substrate pocket.

Belongs to the class-II aminoacyl-tRNA synthetase family. In terms of assembly, homodimer.

Its subcellular location is the cytoplasm. The enzyme catalyses tRNA(Gly) + glycine + ATP = glycyl-tRNA(Gly) + AMP + diphosphate. Functionally, catalyzes the attachment of glycine to tRNA(Gly). The protein is Glycine--tRNA ligase of Staphylococcus haemolyticus (strain JCSC1435).